Consider the following 166-residue polypeptide: Interferon gamma (166 aa).

Positions 1–23 (MKYTSYFLALLLCVLLGFSGSYG) are cleaved as a signal peptide. Residue Q24 is modified to Pyrrolidone carboxylic acid. N39 and N106 each carry an N-linked (GlcNAc...) asparagine glycan.

The protein belongs to the type II (or gamma) interferon family. In terms of assembly, homodimer. Interacts with IFNGR1 (via extracellular domain); this interaction promotes IFNGR1 dimerization. Released primarily from activated T lymphocytes.

The protein resides in the secreted. Functionally, type II interferon produced by immune cells such as T-cells and NK cells that plays crucial roles in antimicrobial, antiviral, and antitumor responses by activating effector immune cells and enhancing antigen presentation. Primarily signals through the JAK-STAT pathway after interaction with its receptor IFNGR1 to affect gene regulation. Upon IFNG binding, IFNGR1 intracellular domain opens out to allow association of downstream signaling components JAK2, JAK1 and STAT1, leading to STAT1 activation, nuclear translocation and transcription of IFNG-regulated genes. Many of the induced genes are transcription factors such as IRF1 that are able to further drive regulation of a next wave of transcription. Plays a role in class I antigen presentation pathway by inducing a replacement of catalytic proteasome subunits with immunoproteasome subunits. In turn, increases the quantity, quality, and repertoire of peptides for class I MHC loading. Increases the efficiency of peptide generation also by inducing the expression of activator PA28 that associates with the proteasome and alters its proteolytic cleavage preference. Up-regulates as well MHC II complexes on the cell surface by promoting expression of several key molecules such as cathepsins B/CTSB, H/CTSH, and L/CTSL. Participates in the regulation of hematopoietic stem cells during development and under homeostatic conditions by affecting their development, quiescence, and differentiation. The protein is Interferon gamma (IFNG) of Bubalus bubalis (Domestic water buffalo).